Consider the following 3479-residue polypeptide: MANRRVGRGCWEVSPTERRPPAALRGPATEEEASSPPVLFLSHFCRSPFLCFGDVLLGDSRTLPLALDNPNEEVAEVKISHFPAADLGFSVSQRCFVLQPKEKIVISVNWTPFKEGRVREIMTFLVNDVLKHQAILLGNAEKQKKKKRSLWDTIKKKKISASTSHNRRVSNIQNVNKTFSVSQKVDRVRSPLQACENLAMNEGGPPTENNSLTLEENKIPISPISPAFNECHGATCLPLSVRRSTTYSSLHASENRELLNVDSANVSKVSFNEKAVTETSFNSINVNDQSGENSKLILTPNYSSTLNITQSQINFLSPDSFVNNSHGANNELELVTCLSSDMFMTDNSKPVHLQSTTAHEIYQKILSPDSFIKDNYGLNQDLESESVNPILSPNQFLKDNMAYMCTSQQTYKVPLSNENSQVPQSPQDWSKSEVSPCIPEYQGSKSPKAIFEELVEMKSNYYSFIKQNNPKFSAVQDISSHSHDKQPKRRPILSATVTKRKPTCTRENQTEINKPKAKRCLNSAVGEHEKVIHNQKEKEDFHSYLPVIDPVLSKSKSYKNQIMPSLTTASVARKRKSDGSMEDANVRVAVTEHTEEREIKRIHFSPSEPKTSAVKKTKNVITPISKCISNREKLNLKKKTDLLIFKTPISKTSKRTKPIIAVAQSNLTFIKPLKTDIPRHPMPFAAKNMFYDERWKEKQEQGFTWWLNFILTPDDFTVKTNISEVNAATLLLGVENQHKISVPRAPTKEEMSLRAYTARCRLNRLRRAACRLFTSEKMVKAIKKLEIEIEARRLIVRKDRHLWKDVGERQKVLNWLLSYNPLWLRIGLETIYGELISLEDNSDVTGLAMFILNRLLWNPDIAAEYRHPTVPHLYRDGHEGALSKFTLKKLLLLICFLDYAKISKLIDHDPCLFCKDAEFKASKEILLAFSRDFLSGEGDLSRHLGLLGLPVNHVQTPFDEFDFAITNLAVDLQCGVRLVRTMELLTQNWNLSKKLRIPAISRLQKMHNVDIVLQVLKSRGIELSDEHGNTILSKDIVDRHREKTLRLLWKIAFAFQVDISLNLDQLKEEIAFLKHTKSIKKTISLLSCHSDALINKKKGKRDSGSFEQYSENIKLLMDWVNAVCAFYNKKVENFTVSFSDGRVLCYLIHHYHPCYVPFDAICQRTTQTVECTQTGSVVLNSSSESDDSSLDMSLKAFDHENTSELYKELLENEKKNFQLIRSAVRDLGGIPAMINHSDMSNTIPDEKVVITYLSFLCARLLDLRKEIRAARLIQTTWRKYKLKTDLKRHQERDKAARIIQSAVINFLAKQRLRKRVNAALIIQKYWRRVLAQRKLLILKKEKLEKVQNKAASLIQGYWRRYSTRKRFLKLKYYSIILQSRIRMIIAVTSYKRYLWATVTIQRHWRAYLRRKQDQQRYEMLKSSSLIIQSMFRKWKRRKMQSQVKATVILQRAFREWHLRKRAKEENSAIVIQSWYRMHKELRKYIYIRSCVIVIQKRFRCFQAQKLYKRKKESILTIQKYYKAYLKGKIERTNYLQKRAAAIQLQAAFRRLKAHNLCRQIRAACVIQSYWRMRQDRVRFLNLKKTIIKLQAHIRKHQQLQKYKKMKKAAVIIQTHFRAYIFTRKVLASYQKTRSAVIVLQSAYRGMQARKVYIHILTSVIKIQSYYRAYVSKKEFLSLKNTTIKLQSIVKMKQTRKQYLHLRAAALFIQQCYRSKKITTQKREEYMQMRESCIKLQAFVRGYLVRKQMRLQRKAVISLQSYFRMRKARQYYLKMCKAIMVIQNYYHAYKAQVNQRKNFLRVKKAATCLQAAYRGYKVRQLIKQQSIAALKIQSAFRGYNKRVKYQSVLQSIIKIQRWYRAYKTLHDTRTHFLKTKAAVVSLQSAYRGWKVRKQIRREHQAALKIQSAFRMAKAQKQFRLFKTAALVIQQNFRAWTAGRKQRMEYIELRHAVLILQSMWKGKTLRRQLQRQHKCAIIIQSYYRMHVQQKKWKIMKKAALLIQKYYKAYSIGREQHHLYLKTKAAVVTLQSAYRGMKVRKRIKDCNKAAVTIQSKYRAYKTKKKYATYRASAIIIQRWYRGIKITHRQHQEYLNLKKTAIKIQSVYRGIRVRRHIQHMHRAATFIKAMFKMHQSRISYHTMRKAAIVIQVRFRAYYQGKMHREKYLTILKAVKILQASFRGVRVRWTLRKMQIAATLIQSNYRRYKQQTYFNKLKKITKTIQQRYRAVKERNIQFKRYNKLRHSVIYIQAIFRGKKARRHLKMMHVAATLIQRRFRTLMMRRRFLSLKKTAVWIQRKYRAHLCTKHHLQFLQVQNAVIKIQSSYRRWMIRKKMREMHRAATFIQATFRMHRVHMRYQALKQASVVIQQQYRANRAAKLQRQHYLRQRRSAVILQAAFRGVKTRRHLKSMHSSATLIQSRFRSLLVRRRFISLKKATIFVQRKYRATICAKHKLHQFLQLRKAAITIQSSYCTIRRLMVKKKLQEMQRAAVLIQATFRMHRTCVTFQTWKQASILIQQHYRTYRAAKLQKENYIRQWHSAVVIQTAYKGMKARQHLREKHKAAIIIQSTYRMYRQYCFYQKLQWATKIIQEKYRANKKKQKALQHNELKKETCVQASFQDMNIQKQIQEQHQAAIIIQKHCKAFKIRKHYLHLRATVVSIQRRYRKLTAVRTQAVICIQSYYRGFKVRRDIQNMHRAATLIQSFYRMHRAKVDYQTKKTAIVVIQNYYRLYVRVKTERKSFLPVQKSVRTIQAAFRGMKVRQKLKIVSEEKMAAIVNQSALCCYRSKTQYEAVQSEGVMIQEWYKASDLACSQEAECHSQSRAAVTIQNAFRRMVTRKLETQKCAALRIQFFLQMAVYRRRFVQQKRAAITLQHYFRTWQTRKQFLLYRKAAVVLQNHYRAFLSAKHQRQVYLQIRSSVIIIQARSKGFIQKRKFQEIKNSTIKIQAMWRRYRAKKYLCKVKAACKIQAWYRCWRAHKEYLAILKAVKIIQGCFYTKLERTWFLNVRASAIIIQRKWRAILSAKIAHEHFLMIKRHRAACLIQAHYRGYKERQVFLRQKSAALIIQKYIRAREAGKRERIKYIEFKKSTVILQALVRGWLVRKRILEQKTKIRLLHFTAAAYYHLNALRIQRAYKLYLAVKNANKQVNSVICIQRWFRARLQQKKFIQKYSIKKIEHEGQECLSQQNRAASVIQKAVRHFVLRKKQEKFTSGIIKIQALWRGYSWRKKNDCTKIKAIRLSLQVVNREIREENKLYKRTALALHYLLTYKHLSAILEALKHLEVVTRLSPLCCENMAQSGAISKIFVLIRSCNRSVPCMEVIRYAVQVLLNVSKYEKTTSAVYDVENCIDTLLELLQIYREKPGNKVADKGGSIFTKTCCLLAVLLKTTNRASDVRSRSKVVDRIYSLYKLTAHKHKMNTERILHKQKKNSSISIPFIPETPVRTRIVSRLKPDWVLRRDNMEEITNPLQAIQMVMDTLGIPY.

Residues 1 to 29 (MANRRVGRGCWEVSPTERRPPAALRGPAT) form a disordered region. Residues S280, S283, S367, S392, S425, and S605 each carry the phosphoserine modification. Residues 920 to 1056 (KASKEILLAF…LLWKIAFAFQ (137 aa)) form the Calponin-homology (CH) 1 domain. A coiled-coil region spans residues 1057–1078 (VDISLNLDQLKEEIAFLKHTKS). S1103 carries the post-translational modification Phosphoserine. Residues 1110 to 1261 (SENIKLLMDW…YLSFLCARLL (152 aa)) form the Calponin-homology (CH) 2 domain. IQ domains are found at residues 1347 to 1378 (QNKA…IILQ), 1393 to 1422 (YLWA…MLKS), 1582 to 1613 (LKKT…VIIQ), 1605 to 1634 (MKKA…KTRS), 1632 to 1661 (TRSA…SVIK), 1655 to 1684 (ILTS…TTIK), 1728 to 1757 (MRES…AVIS), 1751 to 1782 (QRKA…MVIQ), 1801 to 1830 (VKKA…AALK), 1824 to 1853 (QSIA…SIIK), 1874 to 1903 (TKAA…AALK), 1897 to 1928 (EHQA…LVIQ), 1947 to 1978 (LRHA…IIIQ), 1970 to 2001 (QHKC…LLIQ), 2020 to 2049 (TKAA…AAVT), 2043 to 2074 (CNKA…IIIQ), 2093 to 2124 (LKKT…TFIK), 2116 to 2147 (MHRA…IVIQ), 2239 to 2270 (LRHS…TLIQ), 2262 to 2293 (MHVA…VWIQ), 2311 to 2342 (VQNA…TFIQ), 2334 to 2365 (MHRA…VVIQ), 2384 to 2415 (QRRS…TLIQ), 2407 to 2438 (MHSS…IFVQ), 2533 to 2564 (QWHS…IIIQ), 2627 to 2656 (QHQA…TVVS), 2668 to 2699 (RTQA…TLIQ), 2691 to 2722 (MHRA…VVIQ), 2741 to 2770 (VQKS…EKMA), 2817 to 2848 (QSRA…RIQF), 2862 to 2893 (QKRA…VVLQ), 2912 to 2941 (IRSS…STIK), 2935 to 2966 (IKNS…KIQA), 2957 to 2988 (KVKA…KIIQ), 3032 to 3063 (RHRA…LIIQ), 3082 to 3113 (FKKS…RLLH), and 3206 to 3237 (FTSG…IRLS).

It is found in the cytoplasm. The protein localises to the cytoskeleton. Its subcellular location is the spindle. It localises to the nucleus. Probable role in mitotic spindle regulation and coordination of mitotic processes. May have a preferential role in regulating neurogenesis. In Macaca mulatta (Rhesus macaque), this protein is Abnormal spindle-like microcephaly-associated protein homolog (ASPM).